Here is a 63-residue protein sequence, read N- to C-terminus: Large ribosomal subunit protein uL30 (63 aa).

It belongs to the universal ribosomal protein uL30 family. Part of the 50S ribosomal subunit.

The polypeptide is Large ribosomal subunit protein uL30 (Caulobacter sp. (strain K31)).